A 71-amino-acid polypeptide reads, in one-letter code: SPI-2 type 3 secretion system needle filament protein (71 aa).

The protein belongs to the SctF family. The core secretion machinery of the T3SS is composed of approximately 20 different proteins, including cytoplasmic components, a base, an export apparatus and a needle. This subunit polymerizes and forms the helical needle filament.

The protein resides in the secreted. It is found in the cell surface. In terms of biological role, component of the type III secretion system (T3SS), also called injectisome, which is used to inject bacterial effector proteins into eukaryotic host cells. SsaG/SctF2 forms the external needle filament that protrudes from the bacterial surface. Its function is as follows. During infection, can induce innate immune responses. The needle proteins interact with host TLR2 or TLR4, and induce signaling by NF-kappa-B and/or AP-1. This activation is MyD88 dependent and results in increased expression of cytokines, including TNF-alpha, IL-6 and IL-8. The polypeptide is SPI-2 type 3 secretion system needle filament protein (Salmonella typhimurium (strain LT2 / SGSC1412 / ATCC 700720)).